Here is a 392-residue protein sequence, read N- to C-terminus: Putative glutamate--cysteine ligase 2 (392 aa).

The segment at 347-367 is disordered; the sequence is AARKHGAAPEPGTRTRGDDGV.

It belongs to the glutamate--cysteine ligase type 2 family. YbdK subfamily.

The enzyme catalyses L-cysteine + L-glutamate + ATP = gamma-L-glutamyl-L-cysteine + ADP + phosphate + H(+). Its function is as follows. ATP-dependent carboxylate-amine ligase which exhibits weak glutamate--cysteine ligase activity. The sequence is that of Putative glutamate--cysteine ligase 2 from Corynebacterium jeikeium (strain K411).